A 633-amino-acid polypeptide reads, in one-letter code: Sodium- and chloride-dependent glycine transporter 1 (633 aa).

The Cytoplasmic portion of the chain corresponds to 1 to 30 (MGLCVNGAVPSEATKKDENLKRGNWGNQIE). Helical transmembrane passes span 31 to 51 (FVLT…FPYL), 58 to 78 (GAFM…LFFM), and 113 to 133 (YIGI…FASM). The Extracellular segment spans residues 134 to 208 (NRVLPWTYCN…ISEDIGDFGE (75 aa)). N158, N164, N173, and N179 each carry an N-linked (GlcNAc...) asparagine glycan. 9 helical membrane-spanning segments follow: residues 209–229 (VQLP…LCLI), 238–258 (VVYF…IRGI), 283–303 (VWGD…GGLI), 330–350 (SVYA…HLGV), 373–393 (LLPI…LLGL), 429–449 (IIGF…WLLL), 453–473 (YAAS…VMYI), 493–513 (LFFQ…ILIF), and 533–553 (ITIG…YAIF). The Cytoplasmic segment spans residues 554–633 (KIWCSEGDTF…GQAHTQDSKV (80 aa)). The segment at 588 to 633 (RYAQMSSTRSESNPEAQPLNPEKMKEDLSLTIQGSNGQAHTQDSKV) is disordered. 2 stretches are compositionally biased toward polar residues: residues 591-602 (QMSSTRSESNPE) and 617-633 (LTIQ…DSKV).

It belongs to the sodium:neurotransmitter symporter (SNF) (TC 2.A.22) family. SLC6A9 subfamily. As to expression, first expressed in early tailbud stage embryos in the midbrain and anterior spinal cord, and weakly in the hindbrain. By late tailbud stages, expression extends posteriorly in the spinal cord to appear in between somites. Expressed in the forebrain, retina, between the somites and in the blood islands by the swimming tadpole stages.

The protein resides in the cell membrane. The enzyme catalyses glycine(out) + chloride(out) + 2 Na(+)(out) = glycine(in) + chloride(in) + 2 Na(+)(in). Its function is as follows. Sodium- and chloride-dependent glycine transporter which is essential for regulating glycine concentrations at inhibitory glycinergic synapses. This chain is Sodium- and chloride-dependent glycine transporter 1, found in Xenopus laevis (African clawed frog).